We begin with the raw amino-acid sequence, 345 residues long: Anthranilate phosphoribosyltransferase (345 aa).

5-phospho-alpha-D-ribose 1-diphosphate is bound by residues Gly-86, 89–90 (GD), Thr-94, 96–99 (NIST), 114–122 (KHGGRGVSS), and Ser-126. Residue Gly-86 participates in anthranilate binding. Ser-98 serves as a coordination point for Mg(2+). Position 172 (Arg-172) interacts with anthranilate. Mg(2+) contacts are provided by Asp-231 and Glu-232.

Belongs to the anthranilate phosphoribosyltransferase family. Homodimer. The cofactor is Mg(2+).

The enzyme catalyses N-(5-phospho-beta-D-ribosyl)anthranilate + diphosphate = 5-phospho-alpha-D-ribose 1-diphosphate + anthranilate. It functions in the pathway amino-acid biosynthesis; L-tryptophan biosynthesis; L-tryptophan from chorismate: step 2/5. Catalyzes the transfer of the phosphoribosyl group of 5-phosphorylribose-1-pyrophosphate (PRPP) to anthranilate to yield N-(5'-phosphoribosyl)-anthranilate (PRA). The sequence is that of Anthranilate phosphoribosyltransferase from Ralstonia pickettii (strain 12J).